Consider the following 118-residue polypeptide: MTRIKRGSIARRRRKKMCFFASSFRGAHSRLTRTITQQGIRALVSADRDRDRQKRDFRRLWITRLNAVIREMGIYYNYSKLIRDLYNNQLLLNRKILSQIAISNSKCLYMISNGILQI.

Belongs to the bacterial ribosomal protein bL20 family.

It is found in the plastid. Its function is as follows. Binds directly to 23S ribosomal RNA and is necessary for the in vitro assembly process of the 50S ribosomal subunit. It is not involved in the protein synthesizing functions of that subunit. This chain is Large ribosomal subunit protein bL20c (rpl20), found in Cuscuta reflexa (Southern Asian dodder).